We begin with the raw amino-acid sequence, 1072 residues long: Carbamoyl phosphate synthase large chain (1072 aa).

A carboxyphosphate synthetic domain region spans residues 1–401 (MPKRLDINTI…SLLKAVRSLE (401 aa)). The ATP site is built by Arg-129, Arg-169, Gly-175, Gly-176, Lys-208, Ile-210, Glu-215, Gly-241, Val-242, His-243, Gln-284, and Glu-298. Residues 133–327 (RTLMQELNEP…IAKLAAKIAV (195 aa)) form the ATP-grasp 1 domain. Residues Gln-284, Glu-298, and Asn-300 each coordinate Mg(2+). Positions 284, 298, and 300 each coordinate Mn(2+). The oligomerization domain stretch occupies residues 402–546 (LGVYHLELEH…YSTYGDENES (145 aa)). Residues 547–929 (VRTDRKSVVV…ALYKGLVASG (383 aa)) form a carbamoyl phosphate synthetic domain region. The ATP-grasp 2 domain maps to 671–861 (EAALTQLGIP…MANVATKVIL (191 aa)). ATP is bound by residues Arg-707, Arg-746, Glu-752, Gly-777, Val-778, His-779, Ser-780, Gln-820, and Glu-832. Mg(2+) is bound by residues Gln-820, Glu-832, and Asn-834. Mn(2+) contacts are provided by Gln-820, Glu-832, and Asn-834. The 143-residue stretch at 930-1072 (INIPTHGSVI…QTKRHEVVHA (143 aa)) folds into the MGS-like domain. The segment at 930–1072 (INIPTHGSVI…QTKRHEVVHA (143 aa)) is allosteric domain.

The protein belongs to the CarB family. Composed of two chains; the small (or glutamine) chain promotes the hydrolysis of glutamine to ammonia, which is used by the large (or ammonia) chain to synthesize carbamoyl phosphate. Tetramer of heterodimers (alpha,beta)4. The cofactor is Mg(2+). It depends on Mn(2+) as a cofactor.

The catalysed reaction is hydrogencarbonate + L-glutamine + 2 ATP + H2O = carbamoyl phosphate + L-glutamate + 2 ADP + phosphate + 2 H(+). The enzyme catalyses hydrogencarbonate + NH4(+) + 2 ATP = carbamoyl phosphate + 2 ADP + phosphate + 2 H(+). It participates in amino-acid biosynthesis; L-arginine biosynthesis; carbamoyl phosphate from bicarbonate: step 1/1. It functions in the pathway pyrimidine metabolism; UMP biosynthesis via de novo pathway; (S)-dihydroorotate from bicarbonate: step 1/3. Functionally, large subunit of the glutamine-dependent carbamoyl phosphate synthetase (CPSase). CPSase catalyzes the formation of carbamoyl phosphate from the ammonia moiety of glutamine, carbonate, and phosphate donated by ATP, constituting the first step of 2 biosynthetic pathways, one leading to arginine and/or urea and the other to pyrimidine nucleotides. The large subunit (synthetase) binds the substrates ammonia (free or transferred from glutamine from the small subunit), hydrogencarbonate and ATP and carries out an ATP-coupled ligase reaction, activating hydrogencarbonate by forming carboxy phosphate which reacts with ammonia to form carbamoyl phosphate. The protein is Carbamoyl phosphate synthase large chain of Bacillus cereus (strain G9842).